Reading from the N-terminus, the 238-residue chain is Protein A47 (238 aa).

It belongs to the orthopoxvirus A47 protein family.

This chain is Protein A47, found in Vaccinia virus (strain Ankara) (VACV).